Consider the following 171-residue polypeptide: Large ribosomal subunit protein bL17 (171 aa).

Over residues 140–152 the composition is skewed to basic and acidic residues; it reads KREIQTKAREEKR. Residues 140–171 form a disordered region; the sequence is KREIQTKAREEKRATRKSNSAPVSKETTSKKK. The span at 156 to 165 shows a compositional bias: polar residues; sequence KSNSAPVSKE.

This sequence belongs to the bacterial ribosomal protein bL17 family. In terms of assembly, part of the 50S ribosomal subunit. Contacts protein L32.

The protein is Large ribosomal subunit protein bL17 of Leptospira interrogans serogroup Icterohaemorrhagiae serovar copenhageni (strain Fiocruz L1-130).